A 694-amino-acid polypeptide reads, in one-letter code: MSDKRPRSPCSNNNDELNDSSVLTENMDTVATRSKNLPFHETYKSKPTPADKPYRVDGIDKYKELYEQSIRDPEGFWSQMARKELRWLRDFTKVRSSGTCLQDRLAWFLNGKLNVCDNCVDRWAEIQPNTTALIWEGDDPSSIRHISYIELFRNVCKMANVLKRFGIKKGDSVGIYMPMIPETIYTMLACARIGAVHMVVFAGFAAQNLLERLVNARCKIVVTADQGSRGKKIINLKDVVDKALEKIPEIKTCIVFRHLNGPIEFVKGRDFDGETLMRSEKPYCPLEDMDSEDPLFYLYTSGSTGTPKGVQHSTAGYLLYAAVTQKYLFNIHPGDIFGCAGDIGWITGHSYLVYAPLCNGITTLIFEGVPTYPNAGRYWEMVERHRITHFYAAPTAIRTLKRLGDDFVKKHDRSSLRVLGSVGEPINPSAWRWYHSVVGEERCSIVDTYWQTETGGIVIAPIPGCFDTKPGSATFPFFGIEPAILDPDTGKEIDGPGSGVLCIKNSWPGMFRGIFGAHYLHEIYTKPFPKYYFTGDGVLRDQDGYLWITGRIDDTINVSGHRLSSKEIEDALTNHFGIAEAAAVAIDHDVKGNALVCFVVLKDSGNRTFDLNNSSPHPFEYELRMCVRTQIGPVATPDHIIVVENIPKTRSGKVVRRLLRKIATGCNDYGDISTVANPECIKSIESSWAQYLKR.

The tract at residues 1-23 (MSDKRPRSPCSNNNDELNDSSVL) is disordered. The span at 9 to 23 (PCSNNNDELNDSSVL) shows a compositional bias: polar residues. Residues 229 to 232 (RGKK) and Thr347 each bind CoA. ATP contacts are provided by residues 423–425 (GEP), 447–452 (DTYWQT), Asp536, and Arg551. Residue Ser559 coordinates CoA. Arg562 lines the ATP pocket. Arg628 lines the CoA pocket.

The protein belongs to the ATP-dependent AMP-binding enzyme family.

The catalysed reaction is acetate + ATP + CoA = acetyl-CoA + AMP + diphosphate. This Cryptosporidium parvum protein is Acetyl-coenzyme A synthetase (ACS).